The chain runs to 378 residues: Stimulator of interferon genes protein (378 aa).

Over 1 to 17 the chain is Cytoplasmic; the sequence is MPHSSLHPSIPQPRGLR. A mediates interaction with ZDHHC1 and ZDHHC11 region spans residues 1–190; the sequence is MPHSSLHPSI…IYNQFHNNTL (190 aa). A helical transmembrane segment spans residues 18–34; that stretch reads AQKAALVLLSACLVALW. At 35-44 the chain is on the lumenal side; the sequence is GLGEPPDYTL. The chain crosses the membrane as a helical span at residues 45 to 69; the sequence is KWLVLHLASQQMGLLIKGICSLAEE. Topologically, residues 70–91 are cytoplasmic; sequence LCHVHSRYHGSYWRAVRACLCS. The S-palmitoyl cysteine moiety is linked to residue cysteine 88. Residues 92 to 106 form a helical membrane-spanning segment; the sequence is SMRCGALLLLSCYFY. At 107–116 the chain is on the lumenal side; the sequence is CSLPNMADLP. Residues 117–134 traverse the membrane as a helical segment; sequence FTWMLALLGLSQALNILL. The Cytoplasmic segment spans residues 135–378; it reads GLQGLAPAEV…KPLPLRSDVF (244 aa). Lysine 150 is covalently cross-linked (Glycyl lysine isopeptide (Lys-Gly) (interchain with G-Cter in ubiquitin)). Positions 153-339 are cyclic dinucleotide-binding domain (CBD); the sequence is FNVAHGLAWS…LQHLRQEERE (187 aa). 2 residues coordinate 2',3'-cGAMP: serine 162 and tyrosine 167. 3',3'-c-di-GMP-binding residues include serine 162 and tyrosine 167. Tyrosine 167 is a 2',3'-cUAMP binding site. Lysine 236 participates in a covalent cross-link: Glycyl lysine isopeptide (Lys-Gly) (interchain with G-Cter in ubiquitin). 2 residues coordinate 2',3'-cGAMP: arginine 238 and threonine 263. 2',3'-cUAMP contacts are provided by arginine 238 and threonine 263. 3',3'-c-di-GMP is bound by residues 238–241 and threonine 263; that span reads RVYT. Positions 339-378 are C-terminal tail (CTT); it reads EVTMGSTETSVMPGSSVLSQEPELLISGLEKPLPLRSDVF. Serine 354 carries the post-translational modification Phosphoserine. 2 positions are modified to phosphoserine; by TBK1: serine 357 and serine 365. Residues 362–365 carry the pLxIS motif motif; sequence LLIS.

This sequence belongs to the STING family. In terms of assembly, homodimer; forms a homodimer in absence of cyclic nucleotide (c-di-GMP or cGAMP); 'Lys-63'-linked ubiquitination at Lys-150 is required for homodimerization. Homotetramer; in presence of cyclic nucleotide (c-di-GMP or cGAMP), forms tetramers and higher-order oligomers through side-by-side packing. Interacts (when phosphorylated) with IRF3; following activation and phosphorylation on the pLxIS motif by TBK1, recruits IRF3. Interacts with RIGI, MAVS and SSR2. Interacts with RNF5 and TRIM56. Interacts with TBK1; when homodimer, leading to subsequent production of IFN-beta. Interacts with IFIT1 and IFIT2. Interacts with TRIM29; this interaction induces STING1 ubiquitination and subsequent degradation. Associates with the MHC-II complex. Interacts with STEEP1; interaction takes place upon cGAMP-activation and STING1 phosphorylation by MAP3K7/TAK1 and promotes STING1 translocation to COPII vesicles. Interacts with SEC24A, SEC24B and SEC24C; promoting translocation to COPII vesicles. Interacts (when ubiquitinated) with SQSTM1; leading to relocalization to autophagosomes. Interacts with SURF4. Interacts with HNRNPA2B1. Interacts with ZDHHC1; ZDHHC1 constitutively interacts with STING1 and in presence of DNA viruses activates it by promoting its cGAMP-induced oligomerization and the recruitment of downstream signaling components. Interacts with ZDHHC11; in presence of DNA viruses promotes the recruitment of IRF3 to STING1. Interacts with TOMM70. Interacts with TAB1; promoting recruitment of TAB1 to the endoplasmic reticulum membrane and subsequent activation of MAP3K7/TAK1. Interacts (via transmembrane domain) with TMEM203. Interacts with DDX41. Post-translationally, phosphorylation by TBK1 leads to activation and production of IFN-beta. Following cyclic nucleotide (c-di-GMP or cGAMP)-binding, activation and translocation from the endoplasmic reticulum, STING1 is phosphorylated by TBK1 at Ser-365 in the pLxIS motif. The phosphorylated pLxIS motif constitutes an IRF3-binding motif, leading to recruitment of the transcription factor IRF3 to induce type-I interferons and other cytokines. Phosphorylated on tyrosine residues upon MHC-II aggregation. Dephosphorylation by PPP6C leads to inactivation and decreased production of IFN-beta. Phosphorylation at Ser-357 is also required to activate IRF3. Phosphorylation at Ser-354 by MAP3K7/TAK1 facilitates its interaction with STEEP1, promoting STING1 translocation to COPII vesicles. Ubiquitinated. Ubiquitinated via 'Lys-63'-linked ubiquitin chains in response to double-stranded DNA treatment, leading to relocalization to autophagosomes and subsequent degradation; this process is dependent on SQSTM1. 'Lys-63'-linked ubiquitination mediated by TRIM56 at Lys-150 promotes homodimerization and recruitment of the antiviral kinase TBK1 and subsequent production of IFN-beta. 'Lys-48'-linked polyubiquitination at Lys-150 occurring after viral infection is mediated by RNF5 and leads to proteasomal degradation. 'Lys-11'-linked polyubiquitination at Lys-150 by RNF26 leads to stabilize STING1: it protects STING1 from RNF5-mediated 'Lys-48'-linked polyubiquitination. 'Lys-33'-linked and 'Lys-48'-linked deubiquitinated by USP20; leading to its stabilization and promotion of innate antiviral response. 'Lys-48'-linked deubiquitinated by USP44; leading to its stabilization and promotion of innate antiviral response. 'Lys-63'-linked deubiquitinated by USP49; leading to inhibition of the subsequent recruitment of TBK1 to the signaling complex. 'Lys-63'-linked ubiquitination mediated by RNF39 promotes the activation of the cGAS-STING pathway. In terms of processing, palmitoylation takes place in the Golgi apparatus and creates a platform for the recruitment of TBK1.

It localises to the endoplasmic reticulum membrane. The protein resides in the cytoplasm. It is found in the perinuclear region. Its subcellular location is the endoplasmic reticulum-Golgi intermediate compartment membrane. The protein localises to the golgi apparatus membrane. It localises to the cytoplasmic vesicle. The protein resides in the autophagosome membrane. It is found in the mitochondrion outer membrane. Its subcellular location is the cell membrane. The catalysed reaction is H(+)(in) = H(+)(out). Functionally, facilitator of innate immune signaling that acts as a sensor of cytosolic DNA from bacteria and viruses and promotes the production of type I interferon (IFN-alpha and IFN-beta). Innate immune response is triggered in response to non-CpG double-stranded DNA from viruses and bacteria delivered to the cytoplasm. Acts by binding cyclic dinucleotides: recognizes and binds cyclic di-GMP (c-di-GMP), a second messenger produced by bacteria, cyclic UMP-AMP (2',3'-cUAMP), and cyclic GMP-AMP (cGAMP), a messenger produced by CGAS in response to DNA virus in the cytosol. Upon binding to c-di-GMP or cGAMP, STING oligomerizes, translocates from the endoplasmic reticulum and is phosphorylated by TBK1 on the pLxIS motif, leading to recruitment and subsequent activation of the transcription factor IRF3 to induce expression of type I interferon and exert a potent anti-viral state. Exhibits 2',3' phosphodiester linkage-specific ligand recognition: can bind both 2'-3' linked cGAMP (2'-3'-cGAMP) and 3'-3' linked cGAMP but is preferentially activated by 2'-3' linked cGAMP. The preference for 2'-3'-cGAMP, compared to other linkage isomers is probably due to the ligand itself, whichs adopts an organized free-ligand conformation that resembles the STING1-bound conformation and pays low energy costs in changing into the active conformation. In addition to promote the production of type I interferons, plays a direct role in autophagy. Following cGAMP-binding, STING1 buds from the endoplasmic reticulum into COPII vesicles, which then form the endoplasmic reticulum-Golgi intermediate compartment (ERGIC). The ERGIC serves as the membrane source for WIPI2 recruitment and LC3 lipidation, leading to formation of autophagosomes that target cytosolic DNA or DNA viruses for degradation by the lysosome. Promotes autophagy by acting as a proton channel that directs proton efflux from the Golgi to facilitate MAP1LC3B/LC3B lipidation. The autophagy- and interferon-inducing activities can be uncoupled and autophagy induction is independent of TBK1 phosphorylation. Autophagy is also triggered upon infection by bacteria: following c-di-GMP-binding, which is produced by live Gram-positive bacteria, promotes reticulophagy. May be involved in translocon function, the translocon possibly being able to influence the induction of type I interferons. May be involved in transduction of apoptotic signals via its association with the major histocompatibility complex class II (MHC-II). This is Stimulator of interferon genes protein from Bos taurus (Bovine).